The primary structure comprises 1097 residues: DNA-directed RNA polymerase subunit beta (1097 aa).

This sequence belongs to the RNA polymerase beta chain family. In plastids the minimal PEP RNA polymerase catalytic core is composed of four subunits: alpha, beta, beta', and beta''. When a (nuclear-encoded) sigma factor is associated with the core the holoenzyme is formed, which can initiate transcription.

The protein localises to the plastid. It localises to the chloroplast. It carries out the reaction RNA(n) + a ribonucleoside 5'-triphosphate = RNA(n+1) + diphosphate. Functionally, DNA-dependent RNA polymerase catalyzes the transcription of DNA into RNA using the four ribonucleoside triphosphates as substrates. The chain is DNA-directed RNA polymerase subunit beta from Rhodomonas salina (Cryptomonas salina).